Here is a 442-residue protein sequence, read N- to C-terminus: Proline--tRNA ligase (442 aa).

The protein belongs to the class-II aminoacyl-tRNA synthetase family. ProS type 2 subfamily. Homodimer.

The protein resides in the cytoplasm. The catalysed reaction is tRNA(Pro) + L-proline + ATP = L-prolyl-tRNA(Pro) + AMP + diphosphate. Catalyzes the attachment of proline to tRNA(Pro) in a two-step reaction: proline is first activated by ATP to form Pro-AMP and then transferred to the acceptor end of tRNA(Pro). This Brucella abortus (strain S19) protein is Proline--tRNA ligase.